The primary structure comprises 147 residues: Hemoglobin subunit epsilon-M (147 aa).

Residues 3–147 (HFTPEDKTNI…VSSALGHKYH (145 aa)) form the Globin domain. A phosphoserine mark is found at S14 and S51. Heme b contacts are provided by H64 and H93.

It belongs to the globin family. In terms of tissue distribution, red blood cells.

Hemoglobin epsilon chain is a beta-type chain found in early embryos. The polypeptide is Hemoglobin subunit epsilon-M (HBE1) (Didelphis virginiana (North American opossum)).